Reading from the N-terminus, the 760-residue chain is Pentatricopeptide repeat-containing protein At1g20230 (760 aa).

15 PPR repeats span residues 49-79, 80-114, 115-149, 150-180, 181-215, 216-250, 251-285, 286-316, 317-351, 352-386, 387-421, 422-452, 453-487, 488-523, and 524-554; these read DGYISAKLIASYSNYNCFNDADLVLQSIPDP, TIYSFSSLIYALTKAKLFTQSIGVFSRMFSHGLIP, DSHVLPNLFKVCAELSAFKVGKQIHCVSCVSGLDM, DAFVQGSMFHMYMRCGRMGDARKVFDRMSDK, DVVTCSALLCAYARKGCLEEVVRILSEMESSGIEA, NIVSWNGILSGFNRSGYHKEAVVMFQKIHHLGFCP, DQVTVSSVLPSVGDSEMLNMGRLIHGYVIKQGLLK, DKCVISAMIDMYGKSGHVYGIISLFNQFEMM, EAGVCNAYITGLSRNGLVDKALEMFELFKEQTMEL, NVVSWTSIIAGCAQNGKDIEALELFREMQVAGVKP, NHVTIPSMLPACGNIAALGHGRSTHGFAVRVHLLD, NVHVGSALIDMYAKCGRINLSQIVFNMMPTK, NLVCWNSLMNGFSMHGKAKEVMSIFESLMRTRLKP, DFISFTSLLSACGQVGLTDEGWKYFKMMSEEYGIKP, and RLEHYSCMVNLLGRAGKLQEAYDLIKEMPFE. The interval 559-634 is type E motif; sequence VWGALLNSCR…NPGCSWIQVK (76 aa). Residues 635–665 form a type E(+) motif region; that stretch reads NRVYTLLAGDKSHPQIDQITEKMDEISKEMR. The type DYW motif stretch occupies residues 666 to 760; the sequence is KSGHRPNLDF…DGICSCGDFW (95 aa).

Belongs to the PPR family. PCMP-H subfamily.

The sequence is that of Pentatricopeptide repeat-containing protein At1g20230 (PCMP-H21) from Arabidopsis thaliana (Mouse-ear cress).